A 186-amino-acid polypeptide reads, in one-letter code: Ribosome-recycling factor (186 aa).

Belongs to the RRF family.

The protein resides in the cytoplasm. Its function is as follows. Responsible for the release of ribosomes from messenger RNA at the termination of protein biosynthesis. May increase the efficiency of translation by recycling ribosomes from one round of translation to another. The polypeptide is Ribosome-recycling factor (Prosthecochloris aestuarii (strain DSM 271 / SK 413)).